The following is a 353-amino-acid chain: Mitochondrial import inner membrane translocase subunit TIM50 (353 aa).

A mitochondrion-targeting transit peptide spans 1–21 (MAASAALFSRLRSGLRVGARG). The Mitochondrial matrix portion of the chain corresponds to 22–65 (LCTRLAPPPPRTPEQVTEIANRGGSKAQGPQHQPGSEGPSYAKK). Positions 24–59 (TRLAPPPPRTPEQVTEIANRGGSKAQGPQHQPGSEG) are disordered. The chain crosses the membrane as a helical span at residues 66–86 (IALWIAGLLGAGGTVSIVYIF). Residues 87-353 (GNNPVDENGT…SRLWPRSKQP (267 aa)) lie on the Mitochondrial intermembrane side of the membrane. The 144-residue stretch at 143–286 (YYQPPYTLVL…LDLSAFLKTI (144 aa)) folds into the FCP1 homology domain. Phosphoserine is present on Ser-341.

It belongs to the TIM50 family. As to quaternary structure, component of the TIM23 complex at least composed of TIMM23, TIMM17 (TIMM17A or TIMM17B) and TIMM50; within this complex, directly interacts with TIMM23. The complex interacts with the TIMM44 component of the PAM complex and with DNAJC15.

Its subcellular location is the mitochondrion inner membrane. In terms of biological role, essential component of the TIM23 complex, a complex that mediates the translocation of transit peptide-containing proteins across the mitochondrial inner membrane. Has some phosphatase activity in vitro; however such activity may not be relevant in vivo. In Mus musculus (Mouse), this protein is Mitochondrial import inner membrane translocase subunit TIM50 (Timm50).